The following is a 197-amino-acid chain: Fucoxanthin-chlorophyll a-c binding protein E, chloroplastic (197 aa).

Residues 1-31 (MKFVVFASLLASAARFAPAQQSARTSVATNM) constitute a chloroplast transit peptide. 3 consecutive transmembrane segments (helical) span residues 73-94 (ISMLAVAGYLVQENGIRLPGDI), 114-134 (ISGAGIAQIVAFIGFLELAVM), and 174-196 (GRAAQMGILALMVHEQLGVSLIP).

It belongs to the fucoxanthin chlorophyll protein family. The LHC complex of chromophytic algae is composed of fucoxanthin, chlorophyll A and C bound non-covalently by fucoxanthin chlorophyll proteins (FCPs). The ratio of the pigments in LHC; fucoxanthin: chlorophyll C: chlorophyll A; (0.6-1): (0.1-0.3): (1).

It localises to the plastid. The protein localises to the chloroplast thylakoid membrane. In terms of biological role, the light-harvesting complex (LHC) functions as a light receptor, it captures and delivers excitation energy to photosystems with which it is closely associated. Energy is transferred from the carotenoid and chlorophyll C (or B) to chlorophyll A and the photosynthetic reaction centers where it is used to synthesize ATP and reducing power. This chain is Fucoxanthin-chlorophyll a-c binding protein E, chloroplastic (FCPE), found in Phaeodactylum tricornutum (Diatom).